Here is a 166-residue protein sequence, read N- to C-terminus: Protein TIFY 11e (166 aa).

Residues 65–100 (ASSAAAQMTIFYGGRVLVLDECPADRAAALLRLAAS) enclose the Tify domain. The Jas signature appears at 123 to 148 (PVARKASLQRFMEKRKGRLAARGQPY). Residues 125 to 132 (ARKASLQR) carry the Nuclear localization signal motif.

It belongs to the TIFY/JAZ family. Post-translationally, ubiquitinated. Targeted for degradation by the SCF(COI1) E3 ubiquitin ligase-proteasome pathway during jasmonate signaling.

Its subcellular location is the nucleus. Its function is as follows. Repressor of jasmonate responses. The sequence is that of Protein TIFY 11e from Oryza sativa subsp. japonica (Rice).